The sequence spans 206 residues: LexA repressor (206 aa).

Residues 28-48 (RAEIATRLGFKSANAAEEHLK) constitute a DNA-binding region (H-T-H motif). Residues Ser-123 and Lys-160 each act as for autocatalytic cleavage activity in the active site.

Belongs to the peptidase S24 family. Homodimer.

The enzyme catalyses Hydrolysis of Ala-|-Gly bond in repressor LexA.. Represses a number of genes involved in the response to DNA damage (SOS response), including recA and lexA. In the presence of single-stranded DNA, RecA interacts with LexA causing an autocatalytic cleavage which disrupts the DNA-binding part of LexA, leading to derepression of the SOS regulon and eventually DNA repair. This chain is LexA repressor, found in Shewanella sp. (strain MR-7).